We begin with the raw amino-acid sequence, 85 residues long: Large ribosomal subunit protein bL27 (85 aa).

This sequence belongs to the bacterial ribosomal protein bL27 family.

This Cellvibrio japonicus (strain Ueda107) (Pseudomonas fluorescens subsp. cellulosa) protein is Large ribosomal subunit protein bL27.